The sequence spans 192 residues: Ornithine lipid N-methyltransferase (192 aa).

This sequence belongs to the methyltransferase superfamily.

The enzyme catalyses an N(2)-[(3R)-3-(2-saturated-acyloxy)acyl]-L-ornithine lipid + 3 S-adenosyl-L-methionine = an N,N,N-trimethylornithine lipid + 3 S-adenosyl-L-homocysteine + 3 H(+). Functionally, catalyzes the 3-fold methylation of ornithine lipids. Forms ornithine lipids that are mono-, di-, and trimethylated on the delta-nitrogen of the ornithine head group. The sequence is that of Ornithine lipid N-methyltransferase from Singulisphaera acidiphila (strain ATCC BAA-1392 / DSM 18658 / VKM B-2454 / MOB10).